The chain runs to 494 residues: Aspartyl/glutamyl-tRNA(Asn/Gln) amidotransferase subunit B (494 aa).

This sequence belongs to the GatB/GatE family. GatB subfamily. Heterotrimer of A, B and C subunits.

The catalysed reaction is L-glutamyl-tRNA(Gln) + L-glutamine + ATP + H2O = L-glutaminyl-tRNA(Gln) + L-glutamate + ADP + phosphate + H(+). It carries out the reaction L-aspartyl-tRNA(Asn) + L-glutamine + ATP + H2O = L-asparaginyl-tRNA(Asn) + L-glutamate + ADP + phosphate + 2 H(+). Its function is as follows. Allows the formation of correctly charged Asn-tRNA(Asn) or Gln-tRNA(Gln) through the transamidation of misacylated Asp-tRNA(Asn) or Glu-tRNA(Gln) in organisms which lack either or both of asparaginyl-tRNA or glutaminyl-tRNA synthetases. The reaction takes place in the presence of glutamine and ATP through an activated phospho-Asp-tRNA(Asn) or phospho-Glu-tRNA(Gln). The chain is Aspartyl/glutamyl-tRNA(Asn/Gln) amidotransferase subunit B from Rhodopseudomonas palustris (strain HaA2).